Here is a 660-residue protein sequence, read N- to C-terminus: Bifunctional polymyxin resistance protein ArnA (660 aa).

Residues 1–304 (MKAVIFAYHD…TLGLVAGARL (304 aa)) form a formyltransferase ArnAFT region. His104 serves as the catalytic Proton donor; for formyltransferase activity. (6R)-10-formyltetrahydrofolate contacts are provided by residues Arg114 and 136–140 (VKRAD). A dehydrogenase ArnADH region spans residues 314–660 (RRIRVLILGV…RSVDVAERAS (347 aa)). NAD(+)-binding positions include Asp347 and 368 to 369 (DI). Residues Ala393, Tyr398, and 432–433 (TS) each bind UDP-alpha-D-glucuronate. Glu434 functions as the Proton acceptor; for decarboxylase activity in the catalytic mechanism. UDP-alpha-D-glucuronate is bound by residues Arg460, Asn492, 526-535 (KLIDGGQQKR), and Tyr613. The active-site Proton donor; for decarboxylase activity is the Arg619.

In the N-terminal section; belongs to the Fmt family. UDP-L-Ara4N formyltransferase subfamily. The protein in the C-terminal section; belongs to the NAD(P)-dependent epimerase/dehydratase family. UDP-glucuronic acid decarboxylase subfamily. Homohexamer, formed by a dimer of trimers.

It carries out the reaction UDP-alpha-D-glucuronate + NAD(+) = UDP-beta-L-threo-pentopyranos-4-ulose + CO2 + NADH. The enzyme catalyses UDP-4-amino-4-deoxy-beta-L-arabinose + (6R)-10-formyltetrahydrofolate = UDP-4-deoxy-4-formamido-beta-L-arabinose + (6S)-5,6,7,8-tetrahydrofolate + H(+). The protein operates within nucleotide-sugar biosynthesis; UDP-4-deoxy-4-formamido-beta-L-arabinose biosynthesis; UDP-4-deoxy-4-formamido-beta-L-arabinose from UDP-alpha-D-glucuronate: step 1/3. It participates in nucleotide-sugar biosynthesis; UDP-4-deoxy-4-formamido-beta-L-arabinose biosynthesis; UDP-4-deoxy-4-formamido-beta-L-arabinose from UDP-alpha-D-glucuronate: step 3/3. Its pathway is bacterial outer membrane biogenesis; lipopolysaccharide biosynthesis. Bifunctional enzyme that catalyzes the oxidative decarboxylation of UDP-glucuronic acid (UDP-GlcUA) to UDP-4-keto-arabinose (UDP-Ara4O) and the addition of a formyl group to UDP-4-amino-4-deoxy-L-arabinose (UDP-L-Ara4N) to form UDP-L-4-formamido-arabinose (UDP-L-Ara4FN). The modified arabinose is attached to lipid A and is required for resistance to polymyxin and cationic antimicrobial peptides. This is Bifunctional polymyxin resistance protein ArnA from Salmonella heidelberg (strain SL476).